We begin with the raw amino-acid sequence, 286 residues long: Aquaporin PIP2-4 (286 aa).

The next 2 helical transmembrane spans lie at 40 to 60 (ALIA…ATVI) and 77 to 97 (CGGV…FILV). The short motif at 109–111 (NPA) is the NPA 1 element. 3 consecutive transmembrane segments (helical) span residues 128–148 (LLYM…VKGF), 170–190 (GTGL…VFSA), and 204–224 (VLAP…TIPI). Positions 230–232 (NPA) match the NPA 2 motif. Residues 252-272 (IFWVGPFIGAAIAALYHQVIL) form a helical membrane-spanning segment.

Belongs to the MIP/aquaporin (TC 1.A.8) family. PIP (TC 1.A.8.11) subfamily. In terms of tissue distribution, expressed in roots.

It localises to the cell membrane. In terms of biological role, water channel required to facilitate the transport of water across cell membrane. May play a role in root water uptake. The polypeptide is Aquaporin PIP2-4 (PIP2-4) (Oryza sativa subsp. japonica (Rice)).